Consider the following 158-residue polypeptide: Endoribonuclease YbeY (158 aa).

His121, His125, and His131 together coordinate Zn(2+).

Belongs to the endoribonuclease YbeY family. Zn(2+) serves as cofactor.

It is found in the cytoplasm. Single strand-specific metallo-endoribonuclease involved in late-stage 70S ribosome quality control and in maturation of the 3' terminus of the 16S rRNA. This is Endoribonuclease YbeY from Exiguobacterium sp. (strain ATCC BAA-1283 / AT1b).